Reading from the N-terminus, the 204-residue chain is Adenylyl-sulfate kinase (204 aa).

Residue 34-41 (GLSGSGKS) coordinates ATP. The active-site Phosphoserine intermediate is Ser108.

The protein belongs to the APS kinase family.

It catalyses the reaction adenosine 5'-phosphosulfate + ATP = 3'-phosphoadenylyl sulfate + ADP + H(+). Its pathway is sulfur metabolism; hydrogen sulfide biosynthesis; sulfite from sulfate: step 2/3. Functionally, catalyzes the synthesis of activated sulfate. The polypeptide is Adenylyl-sulfate kinase (Phocaeicola vulgatus (strain ATCC 8482 / DSM 1447 / JCM 5826 / CCUG 4940 / NBRC 14291 / NCTC 11154) (Bacteroides vulgatus)).